The primary structure comprises 56 residues: Large ribosomal subunit protein bL32 (56 aa).

Over residues 1–19 (MAVPKRKKSRSTTRHRRAQ) the composition is skewed to basic residues. The interval 1–22 (MAVPKRKKSRSTTRHRRAQWKT) is disordered.

This sequence belongs to the bacterial ribosomal protein bL32 family.

The sequence is that of Large ribosomal subunit protein bL32 from Cutibacterium acnes (strain DSM 16379 / KPA171202) (Propionibacterium acnes).